A 302-amino-acid chain; its full sequence is Putative peptide permease protein BMEII0861 (302 aa).

The interval 1–22 (MRSSIHASRLRKMGQSIPASTG) is disordered. Transmembrane regions (helical) follow at residues 38–58 (IFGLVLLTPLLFAVLTYPLWL), 101–121 (LLVAVSSVVLSTAIGFLIGAI), 147–167 (IFLLVLASIIGSGIWSTVVVI), 230–250 (ILLEAGLSFLGLGVPPPAASW), and 268–288 (WQWLFPGGALVLAVLAINFIG). Residues 97–288 (GRISLLVAVS…LAVLAINFIG (192 aa)) form the ABC transmembrane type-1 domain.

It belongs to the binding-protein-dependent transport system permease family. The complex is composed of two ATP-binding proteins (BMEII0863 and BMEII0864), two transmembrane proteins (BMEII0860 and BMEII0861) and a solute-binding protein (BMEII0859).

Its subcellular location is the cell inner membrane. Its function is as follows. Probably part of an ABC transporter complex that could be involved in peptide import. Probably responsible for the translocation of the substrate across the membrane. This chain is Putative peptide permease protein BMEII0861, found in Brucella melitensis biotype 1 (strain ATCC 23456 / CCUG 17765 / NCTC 10094 / 16M).